The primary structure comprises 677 residues: Zinc finger protein 526 (677 aa).

3 consecutive C2H2-type zinc fingers follow at residues 57-79 (FMCS…QEQH), 109-131 (FQCG…QDAH), and 141-164 (YQCG…KAQH). The interval 167-190 (TAAAKPPVPPPLPPVTPPPPPPAP) is disordered. Residues 172 to 190 (PPVPPPLPPVTPPPPPPAP) are compositionally biased toward pro residues. Residues 198-220 (YECPECSTLCTTPEEFLEHQGTH) form a C2H2-type 4 zinc finger. Positions 223 to 232 (SLEKEEHNGL) are enriched in basic and acidic residues. Positions 223 to 300 (SLEKEEHNGL…RRASHGPASA (78 aa)) are disordered. Over residues 233–257 (EEEEEDDEDDNEETEEEEEAAAEVG) the composition is skewed to acidic residues. 4 C2H2-type zinc fingers span residues 304–326 (FYCS…GRAH), 331–353 (HECT…LRLH), 359–381 (YLCV…RRAH), and 387–408 (HRCR…RRTH). Positions 408–449 (HAGKSGAPPSAAPPTVASAVASLAPAEPTPPPPAPPTPPAQL) are disordered. Positions 410–433 (GKSGAPPSAAPPTVASAVASLAPA) are enriched in low complexity. The span at 434–449 (EPTPPPPAPPTPPAQL) shows a compositional bias: pro residues. 5 C2H2-type zinc fingers span residues 449-472 (LPCP…RAVH), 479-501 (HRCG…LRTH), 507-529 (FQCH…QLTH), 535-557 (YQCL…RRLH), and 580-602 (YYCG…QRVH). Residues 608-627 (LTLQPPRSPPPAPPPPPEPQ) form a disordered region. A compositionally biased stretch (pro residues) spans 613 to 626 (PRSPPPAPPPPPEP).

Belongs to the krueppel C2H2-type zinc-finger protein family.

Its subcellular location is the nucleus. May be involved in transcriptional regulation. This is Zinc finger protein 526 (ZNF526) from Bos taurus (Bovine).